We begin with the raw amino-acid sequence, 124 residues long: Small ribosomal subunit protein uS12 (124 aa).

At D89 the chain carries 3-methylthioaspartic acid.

Belongs to the universal ribosomal protein uS12 family. As to quaternary structure, part of the 30S ribosomal subunit. Contacts proteins S8 and S17. May interact with IF1 in the 30S initiation complex.

Functionally, with S4 and S5 plays an important role in translational accuracy. Its function is as follows. Interacts with and stabilizes bases of the 16S rRNA that are involved in tRNA selection in the A site and with the mRNA backbone. Located at the interface of the 30S and 50S subunits, it traverses the body of the 30S subunit contacting proteins on the other side and probably holding the rRNA structure together. The combined cluster of proteins S8, S12 and S17 appears to hold together the shoulder and platform of the 30S subunit. The chain is Small ribosomal subunit protein uS12 from Arthrobacter sp. (strain FB24).